We begin with the raw amino-acid sequence, 193 residues long: Small ribosomal subunit protein eS1 (193 aa).

This sequence belongs to the eukaryotic ribosomal protein eS1 family.

This chain is Small ribosomal subunit protein eS1, found in Methanobrevibacter smithii (strain ATCC 35061 / DSM 861 / OCM 144 / PS).